A 317-amino-acid polypeptide reads, in one-letter code: 4-diphosphocytidyl-2-C-methyl-D-erythritol kinase (317 aa).

Lys17 is a catalytic residue. 109 to 119 (PVAGGMGGGSA) provides a ligand contact to ATP. Residue Asp151 is part of the active site.

The protein belongs to the GHMP kinase family. IspE subfamily.

The catalysed reaction is 4-CDP-2-C-methyl-D-erythritol + ATP = 4-CDP-2-C-methyl-D-erythritol 2-phosphate + ADP + H(+). It functions in the pathway isoprenoid biosynthesis; isopentenyl diphosphate biosynthesis via DXP pathway; isopentenyl diphosphate from 1-deoxy-D-xylulose 5-phosphate: step 3/6. Functionally, catalyzes the phosphorylation of the position 2 hydroxy group of 4-diphosphocytidyl-2C-methyl-D-erythritol. The protein is 4-diphosphocytidyl-2-C-methyl-D-erythritol kinase of Paenarthrobacter aurescens (strain TC1).